Reading from the N-terminus, the 255-residue chain is Ribonuclease HII (255 aa).

The RNase H type-2 domain maps to R72–C255. The a divalent metal cation site is built by D78, E79, and D170.

The protein belongs to the RNase HII family. Mn(2+) serves as cofactor. Mg(2+) is required as a cofactor.

The protein localises to the cytoplasm. The catalysed reaction is Endonucleolytic cleavage to 5'-phosphomonoester.. Endonuclease that specifically degrades the RNA of RNA-DNA hybrids. This Bacillus velezensis (strain DSM 23117 / BGSC 10A6 / LMG 26770 / FZB42) (Bacillus amyloliquefaciens subsp. plantarum) protein is Ribonuclease HII.